We begin with the raw amino-acid sequence, 466 residues long: Putative multidrug resistance protein MdtD (466 aa).

14 helical membrane-spanning segments follow: residues 11 to 31, 48 to 68, 71 to 91, 105 to 125, 137 to 157, 164 to 184, 194 to 214, 218 to 238, 262 to 282, 292 to 312, 328 to 347, 351 to 370, 402 to 422, and 429 to 449; these read LWIV…VNTA, SVIV…GWLA, IGVK…SLLC, VIQG…VMKI, FVTL…GFLV, WIFL…WFLM, FDIS…LALD, SLGI…IALL, FSIG…LPFM, GFSP…SMGI, VLVA…ALVA, WIWM…AIRF, SLGV…HIAA, and TVFL…ALIF.

The protein belongs to the major facilitator superfamily. TCR/Tet family.

It localises to the cell inner membrane. This chain is Putative multidrug resistance protein MdtD, found in Pectobacterium atrosepticum (strain SCRI 1043 / ATCC BAA-672) (Erwinia carotovora subsp. atroseptica).